A 672-amino-acid chain; its full sequence is DNA ligase (672 aa).

Residues 32–36 (DAEYD), 81–82 (SL), and Glu-113 each bind NAD(+). Catalysis depends on Lys-115, which acts as the N6-AMP-lysine intermediate. Residues Arg-136, Glu-173, Lys-290, and Lys-314 each coordinate NAD(+). Residues Cys-408, Cys-411, Cys-426, and Cys-432 each contribute to the Zn(2+) site. The region spanning 592-672 (EIDSPFAGKT…EMIRLLGESS (81 aa)) is the BRCT domain.

The protein belongs to the NAD-dependent DNA ligase family. LigA subfamily. Mg(2+) serves as cofactor. The cofactor is Mn(2+).

The enzyme catalyses NAD(+) + (deoxyribonucleotide)n-3'-hydroxyl + 5'-phospho-(deoxyribonucleotide)m = (deoxyribonucleotide)n+m + AMP + beta-nicotinamide D-nucleotide.. In terms of biological role, DNA ligase that catalyzes the formation of phosphodiester linkages between 5'-phosphoryl and 3'-hydroxyl groups in double-stranded DNA using NAD as a coenzyme and as the energy source for the reaction. It is essential for DNA replication and repair of damaged DNA. The protein is DNA ligase of Yersinia enterocolitica serotype O:8 / biotype 1B (strain NCTC 13174 / 8081).